The primary structure comprises 204 residues: Urease accessory protein UreG (204 aa).

Position 12 to 19 (12 to 19) interacts with GTP; the sequence is GPVGSGKT.

It belongs to the SIMIBI class G3E GTPase family. UreG subfamily. Homodimer. UreD, UreF and UreG form a complex that acts as a GTP-hydrolysis-dependent molecular chaperone, activating the urease apoprotein by helping to assemble the nickel containing metallocenter of UreC. The UreE protein probably delivers the nickel.

It is found in the cytoplasm. Its function is as follows. Facilitates the functional incorporation of the urease nickel metallocenter. This process requires GTP hydrolysis, probably effectuated by UreG. In Pseudomonas fluorescens (strain SBW25), this protein is Urease accessory protein UreG.